The chain runs to 257 residues: Phosphate import ATP-binding protein PstB (257 aa).

One can recognise an ABC transporter domain in the interval 11 to 252 (IQVRDLNFYY…PAKKQTEDYI (242 aa)). 43–50 (GPSGSGKS) lines the ATP pocket.

The protein belongs to the ABC transporter superfamily. Phosphate importer (TC 3.A.1.7) family. As to quaternary structure, the complex is composed of two ATP-binding proteins (PstB), two transmembrane proteins (PstC and PstA) and a solute-binding protein (PstS).

It localises to the cell inner membrane. The catalysed reaction is phosphate(out) + ATP + H2O = ADP + 2 phosphate(in) + H(+). Part of the ABC transporter complex PstSACB involved in phosphate import. Responsible for energy coupling to the transport system. The polypeptide is Phosphate import ATP-binding protein PstB (Salmonella choleraesuis (strain SC-B67)).